A 105-amino-acid polypeptide reads, in one-letter code: Small ribosomal subunit protein uS17 (105 aa).

This sequence belongs to the universal ribosomal protein uS17 family. Part of the 30S ribosomal subunit.

Functionally, one of the primary rRNA binding proteins, it binds specifically to the 5'-end of 16S ribosomal RNA. The sequence is that of Small ribosomal subunit protein uS17 from Thermus thermophilus (strain ATCC BAA-163 / DSM 7039 / HB27).